Reading from the N-terminus, the 552-residue chain is BAR/IMD domain-containing adapter protein 2 (552 aa).

Positions 1 to 250 constitute an IMD domain; that stretch reads MSLSRSEEMH…VQLMQQVASN (250 aa). The stretch at 132–153 forms a coiled coil; sequence DALDKCQAELKKLRKKSQGSKN. At serine 261 the chain carries Phosphoserine. The disordered stretch occupies residues 295–369; the sequence is STPIMNGVTG…TLPRSSSMAA (75 aa). Residue threonine 296 is modified to Phosphothreonine. Positions 320-334 are enriched in low complexity; the sequence is QPKSLSPPQSQSKLS. Phosphoserine is present on residues serine 323, serine 325, and serine 336. Residue threonine 340 is modified to Phosphothreonine. A Phosphoserine modification is found at serine 346. Polar residues predominate over residues 348 to 367; sequence TPKNSYATTENKTLPRSSSM. Threonine 360 is modified (phosphothreonine). Phosphoserine is present on residues serine 366, serine 384, serine 395, and serine 454. The region spanning 374 to 437 is the SH3 domain; it reads NGRMRVKAIF…PFSYTRVLDS (64 aa). The segment covering 447 to 457 has biased composition (polar residues); the sequence is LQQGKSSSTGN. Disordered regions lie at residues 447–466 and 525–552; these read LQQGKSSSTGNLLDKDDLAI and TNDRCDLSAQGPEGREHGDGSARTLAGR.

As to quaternary structure, homodimer. Interacts with CDC42 and RAC1 that have been activated by GTP binding. Interacts with ATN1, ADGRB1, EPS8, SHANK1, SHANK2, SHANK3, WASF1 and WASF2. Interacts with ENAH after recruitment of CDC42. Interacts with TIAM1 and DIAPH1. Interacts (via SH3 domain) with E.coli effector protein EspF(U) (via PXXP motifs). Interacts with E.coli intimin receptor Tir. Phosphorylated on tyrosine residues by INSR in response to insulin treatment. As to expression, isoform 1 and isoform 4 are expressed almost exclusively in brain. Isoform 4 is barely detectable in placenta, prostate and testis. A short isoform is ubiquitous, with the highest expression in liver, prostate, testis and placenta.

It localises to the cytoplasm. Its subcellular location is the membrane. It is found in the cell projection. The protein resides in the filopodium. The protein localises to the ruffle. It localises to the cytoskeleton. In terms of biological role, adapter protein that links membrane-bound small G-proteins to cytoplasmic effector proteins. Necessary for CDC42-mediated reorganization of the actin cytoskeleton and for RAC1-mediated membrane ruffling. Involved in the regulation of the actin cytoskeleton by WASF family members and the Arp2/3 complex. Plays a role in neurite growth. Acts syngeristically with ENAH to promote filipodia formation. Plays a role in the reorganization of the actin cytoskeleton in response to bacterial infection. Participates in actin bundling when associated with EPS8, promoting filopodial protrusions. The chain is BAR/IMD domain-containing adapter protein 2 (BAIAP2) from Homo sapiens (Human).